Here is an 833-residue protein sequence, read N- to C-terminus: Serine-rich coiled-coil domain-containing protein 2 (833 aa).

The disordered stretch occupies residues 178–208 (NRSSGNVQKPRVNSCASRSSSGESLAQSPDN). Polar residues predominate over residues 191-208 (SCASRSSSGESLAQSPDN). Serine 222 is modified (phosphoserine). 4 disordered regions span residues 321-345 (LLKS…PADM), 424-452 (NRTR…FDSP), 478-508 (KHTS…SSDG), and 602-631 (DHYH…ESPL). Serine 451 is subject to Phosphoserine. A compositionally biased stretch (low complexity) spans 496 to 506 (SSFELSPSDSS). A compositionally biased stretch (basic residues) spans 606-615 (LSHPGHYHHH). A coiled-coil region spans residues 711 to 747 (DQIYKNEDLLNEITQLKEEIKKKDEKIQLLEQQLATR). The tract at residues 789–833 (FQGMPRTVPPHRRQTSSTTAFQQPSQIYRPRPGKTNKATTYRGPQ) is disordered. The span at 803–814 (TSSTTAFQQPSQ) shows a compositional bias: polar residues.

This sequence belongs to the CCSER family. Expressed in brain (at protein level).

It is found in the cytoplasm. Its subcellular location is the cytoskeleton. Its function is as follows. Microtubule-binding protein which might play a role in microtubule bundling. The protein is Serine-rich coiled-coil domain-containing protein 2 (Ccser2) of Mus musculus (Mouse).